The primary structure comprises 191 residues: Elongation factor P-like protein (191 aa).

Belongs to the elongation factor P family.

In Photobacterium profundum (strain SS9), this protein is Elongation factor P-like protein.